The following is a 271-amino-acid chain: Dermonecrotic toxin LhSicTox-alphaIA2bv (271 aa).

Histidine 3 is a catalytic residue. Mg(2+) is bound by residues glutamate 23 and aspartate 25. Intrachain disulfides connect cysteine 43-cysteine 49 and cysteine 45-cysteine 188. Aspartate 83 provides a ligand contact to Mg(2+).

Belongs to the arthropod phospholipase D family. Class II subfamily. Mg(2+) serves as cofactor. In terms of tissue distribution, expressed by the venom gland.

The protein localises to the secreted. It catalyses the reaction an N-(acyl)-sphingosylphosphocholine = an N-(acyl)-sphingosyl-1,3-cyclic phosphate + choline. It carries out the reaction an N-(acyl)-sphingosylphosphoethanolamine = an N-(acyl)-sphingosyl-1,3-cyclic phosphate + ethanolamine. The enzyme catalyses a 1-acyl-sn-glycero-3-phosphocholine = a 1-acyl-sn-glycero-2,3-cyclic phosphate + choline. The catalysed reaction is a 1-acyl-sn-glycero-3-phosphoethanolamine = a 1-acyl-sn-glycero-2,3-cyclic phosphate + ethanolamine. Functionally, dermonecrotic toxins cleave the phosphodiester linkage between the phosphate and headgroup of certain phospholipids (sphingolipid and lysolipid substrates), forming an alcohol (often choline) and a cyclic phosphate. This toxin acts on sphingomyelin (SM). It may also act on ceramide phosphoethanolamine (CPE), lysophosphatidylcholine (LPC) and lysophosphatidylethanolamine (LPE), but not on lysophosphatidylserine (LPS), and lysophosphatidylglycerol (LPG). It acts by transphosphatidylation, releasing exclusively cyclic phosphate products as second products. Induces dermonecrosis, hemolysis, increased vascular permeability, edema, inflammatory response, and platelet aggregation. In Loxosceles hirsuta (Recluse spider), this protein is Dermonecrotic toxin LhSicTox-alphaIA2bv.